The sequence spans 232 residues: Fibrillarin-like rRNA/tRNA 2'-O-methyltransferase (232 aa).

S-adenosyl-L-methionine-binding positions include 89-90 (TT), 108-109 (EF), 133-134 (DA), and 153-156 (DIAQ).

The protein belongs to the methyltransferase superfamily. Fibrillarin family. Interacts with nop5. Component of box C/D small ribonucleoprotein (sRNP) particles that contain rpl7ae, FlpA and nop5, plus a guide RNA.

Involved in pre-rRNA and tRNA processing. Utilizes the methyl donor S-adenosyl-L-methionine to catalyze the site-specific 2'-hydroxyl methylation of ribose moieties in rRNA and tRNA. Site specificity is provided by a guide RNA that base pairs with the substrate. Methylation occurs at a characteristic distance from the sequence involved in base pairing with the guide RNA. This is Fibrillarin-like rRNA/tRNA 2'-O-methyltransferase from Saccharolobus islandicus (strain L.S.2.15 / Lassen #1) (Sulfolobus islandicus).